Here is a 376-residue protein sequence, read N- to C-terminus: Lipoyl synthase, mitochondrial (376 aa).

[4Fe-4S] cluster contacts are provided by Cys-103, Cys-108, Cys-114, Cys-134, Cys-138, Cys-141, and Ser-349. Residues Glu-119 to Leu-338 enclose the Radical SAM core domain.

This sequence belongs to the radical SAM superfamily. Lipoyl synthase family. [4Fe-4S] cluster serves as cofactor.

The protein localises to the mitochondrion. It carries out the reaction [[Fe-S] cluster scaffold protein carrying a second [4Fe-4S](2+) cluster] + N(6)-octanoyl-L-lysyl-[protein] + 2 oxidized [2Fe-2S]-[ferredoxin] + 2 S-adenosyl-L-methionine + 4 H(+) = [[Fe-S] cluster scaffold protein] + N(6)-[(R)-dihydrolipoyl]-L-lysyl-[protein] + 4 Fe(3+) + 2 hydrogen sulfide + 2 5'-deoxyadenosine + 2 L-methionine + 2 reduced [2Fe-2S]-[ferredoxin]. The protein operates within protein modification; protein lipoylation via endogenous pathway; protein N(6)-(lipoyl)lysine from octanoyl-[acyl-carrier-protein]: step 2/2. Its function is as follows. Catalyzes the radical-mediated insertion of two sulfur atoms into the C-6 and C-8 positions of the octanoyl moiety bound to the lipoyl domains of lipoate-dependent enzymes, thereby converting the octanoylated domains into lipoylated derivatives. This is Lipoyl synthase, mitochondrial from Drosophila ananassae (Fruit fly).